The chain runs to 276 residues: Undecaprenyl-diphosphatase (276 aa).

Helical transmembrane passes span 1–21, 41–61, 97–117, 121–141, 155–175, 200–220, 231–251, and 256–276; these read MHWL…FLPV, LLLD…VFFA, ALLI…FHKI, LFAS…LLWA, VTWG…LPGI, FLLS…DASA, LGGI…LAIV, and LWWF…ANFV.

It belongs to the UppP family.

It is found in the cell inner membrane. It carries out the reaction di-trans,octa-cis-undecaprenyl diphosphate + H2O = di-trans,octa-cis-undecaprenyl phosphate + phosphate + H(+). Its function is as follows. Catalyzes the dephosphorylation of undecaprenyl diphosphate (UPP). Confers resistance to bacitracin. The chain is Undecaprenyl-diphosphatase from Desulfatibacillum aliphaticivorans.